The chain runs to 104 residues: Phycoerythrin alpha-2 chain, chloroplastic (104 aa).

The N-terminal 37 residues, Met1 to Met37, are a transit peptide targeting the chloroplast. 5-hydroxylysine is present on Lys41. 15,16-dihydrobiliverdin-binding residues include Cys56 and Arg58. The 15,16-dihydrobiliverdin chromophore stretch occupies residues Lys61–Tyr63. Lys78 is a binding site for 15,16-dihydrobiliverdin.

It belongs to the phycoerythrin family. In terms of assembly, heterotetramer of 2 different alpha chains and 2 identical beta chains. The subunit composition could comprise of any combination of 2 out of 4 different alpha units with an invariant beta unit. Post-translationally, contains one covalently linked 15,16-dihydrobiliverdin chromophore.

The protein resides in the plastid. It is found in the chloroplast thylakoid membrane. Light-harvesting photosynthetic tetrapyrrole chromophore-protein from the phycobiliprotein complex. The sequence is that of Phycoerythrin alpha-2 chain, chloroplastic (cpeA2) from Rhodomonas sp. (strain CS 24) (Chroomonas sp. (strain CS24)).